Reading from the N-terminus, the 643-residue chain is Threonine--tRNA ligase (643 aa).

Positions 1 to 61 constitute a TGS domain; that stretch reads MIKVTLKDGS…KEDVSLSICT (61 aa). Residues 240-540 are catalytic; that stretch reads DHNKLGRELK…LIEKYAGAFP (301 aa). Residues C335, H386, and H517 each contribute to the Zn(2+) site.

It belongs to the class-II aminoacyl-tRNA synthetase family. In terms of assembly, homodimer. Requires Zn(2+) as cofactor.

It is found in the cytoplasm. It catalyses the reaction tRNA(Thr) + L-threonine + ATP = L-threonyl-tRNA(Thr) + AMP + diphosphate + H(+). Functionally, catalyzes the attachment of threonine to tRNA(Thr) in a two-step reaction: L-threonine is first activated by ATP to form Thr-AMP and then transferred to the acceptor end of tRNA(Thr). Also edits incorrectly charged L-seryl-tRNA(Thr). The chain is Threonine--tRNA ligase from Clostridium botulinum (strain Eklund 17B / Type B).